The chain runs to 187 residues: MLNDMDFIKTCDVPGPTKEAIRAIILYKSAVTPNDEVVDVGCGTGGITCEFAQRAKKVTSIDTNPDAISVTKQNLEKFNLGDNVELINDSGSNALKNIDNMDIAVVGGSGRELEDILEIIDSKLNPKGRIIVTAILVDTKIEAINKLKKLNYNPKIMEVNISNGRVLDRGVMMISENPIAIISANKR.

Residues threonine 17, 41–45 (GCGTG), aspartate 62, and glycine 91 each bind S-adenosyl-L-methionine.

It belongs to the methyltransferase superfamily. Archaeal-type CbiT family.

The catalysed reaction is Co-precorrin-6B + S-adenosyl-L-methionine = Co-precorrin-7 + S-adenosyl-L-homocysteine + CO2. The protein operates within cofactor biosynthesis; adenosylcobalamin biosynthesis; cob(II)yrinate a,c-diamide from sirohydrochlorin (anaerobic route): step 8/10. Its function is as follows. Catalyzes the methylation of C-15 in cobalt-precorrin-6B followed by the decarboxylation of C-12 to form cobalt-precorrin-7. In Methanobrevibacter smithii (strain ATCC 35061 / DSM 861 / OCM 144 / PS), this protein is Probable cobalt-precorrin-6B C(15)-methyltransferase (decarboxylating).